The chain runs to 466 residues: ATP synthase subunit beta (466 aa).

155–162 (GGAGVGKT) provides a ligand contact to ATP.

It belongs to the ATPase alpha/beta chains family. F-type ATPases have 2 components, CF(1) - the catalytic core - and CF(0) - the membrane proton channel. CF(1) has five subunits: alpha(3), beta(3), gamma(1), delta(1), epsilon(1). CF(0) has three main subunits: a(1), b(2) and c(9-12). The alpha and beta chains form an alternating ring which encloses part of the gamma chain. CF(1) is attached to CF(0) by a central stalk formed by the gamma and epsilon chains, while a peripheral stalk is formed by the delta and b chains.

The protein resides in the cell inner membrane. It catalyses the reaction ATP + H2O + 4 H(+)(in) = ADP + phosphate + 5 H(+)(out). Functionally, produces ATP from ADP in the presence of a proton gradient across the membrane. The catalytic sites are hosted primarily by the beta subunits. In Aromatoleum aromaticum (strain DSM 19018 / LMG 30748 / EbN1) (Azoarcus sp. (strain EbN1)), this protein is ATP synthase subunit beta.